Reading from the N-terminus, the 624-residue chain is Glutamine--fructose-6-phosphate aminotransferase [isomerizing] (624 aa).

Residue Cys-2 is the Nucleophile; for GATase activity of the active site. The Glutamine amidotransferase type-2 domain maps to 2 to 225; that stretch reads CGIVGYVGRR…QDQAVVITAD (224 aa). 2 consecutive SIS domains span residues 297–436 and 469–614; these read SDQE…ARGT and LAHR…VDKP. Lys-619 acts as the For Fru-6P isomerization activity in catalysis.

Homodimer.

Its subcellular location is the cytoplasm. The enzyme catalyses D-fructose 6-phosphate + L-glutamine = D-glucosamine 6-phosphate + L-glutamate. Functionally, catalyzes the first step in hexosamine metabolism, converting fructose-6P into glucosamine-6P using glutamine as a nitrogen source. This Mycobacterium bovis (strain ATCC BAA-935 / AF2122/97) protein is Glutamine--fructose-6-phosphate aminotransferase [isomerizing].